The sequence spans 480 residues: Gamma-aminobutyric acid receptor subunit rho-1 (480 aa).

Positions 1 to 21 (MLAVRNMKFGIFLLWWGWVLA) are cleaved as a signal peptide. The Extracellular portion of the chain corresponds to 22–281 (AESTVHWPGR…LYINFTLRRH (260 aa)). The interval 31–67 (REVHEPSKKGSRPQRQRRGAHDDAHKQGSPILKRSSD) is disordered. Residues 39-48 (KGSRPQRQRR) are compositionally biased toward basic residues. Position 126 (arginine 126) interacts with 4-aminobutanoate. The N-linked (GlcNAc...) asparagine glycan is linked to asparagine 141. Position 190 (serine 190) interacts with 4-aminobutanoate. Cysteine 199 and cysteine 213 are disulfide-bonded. Glutamate 218 serves as a coordination point for 4-aminobutanoate. Residues asparagine 235 and asparagine 275 are each glycosylated (N-linked (GlcNAc...) asparagine). The helical transmembrane segment at 282–302 (IFFFLLQTYFPATLMVMLSWV) threads the bilayer. Over 303 to 314 (SFWIDRRAVPAR) the chain is Cytoplasmic. Residues 315-335 (VPLGITTVLTMSTIITGVNAS) form a helical membrane-spanning segment. Topologically, residues 336 to 346 (MPRVSYIKAVD) are extracellular. The helical transmembrane segment at 347–367 (IYLWVSFVFVFLSVLEYAAVN) threads the bilayer. At 368–458 (YLTTVQERKE…MRINTHAIDK (91 aa)) the chain is on the cytoplasmic side. A helical membrane pass occupies residues 459 to 479 (YSRIIFPAAYILFNLIYWSIF). Residue serine 480 is a topological domain, extracellular.

The protein belongs to the ligand-gated ion channel (TC 1.A.9) family. Gamma-aminobutyric acid receptor (TC 1.A.9.5) subfamily. GABRR1 sub-subfamily. As to quaternary structure, three rho subunits (rho-1/GBRR1, rho-2/GBRR2 and rho-3/GBRR3) coassemble either to form functional homopentamers or heteropentamers. Rho-1/GBRR1 subunits can also associate with alpha-1/GBRA1 subunits to form a functional GABAAR. Interacts with SQSTM1.

The protein resides in the postsynaptic cell membrane. It is found in the cell membrane. It catalyses the reaction chloride(in) = chloride(out). Its activity is regulated as follows. Inhibited by TPMPA, a rho-specific antagonist. Inhibited by picrotoxin, when forming a homopentamer. In contrast with other GABAARs, rho-1 GABAAR is not inhibited by bicuculline, when forming a homopentamer. Down-regulated by external protons when forming a homopentamer. Rho subunit of the pentameric ligand-gated chloride channels responsible for mediating the effects of gamma-aminobutyric acid (GABA), the major inhibitory neurotransmitter in the brain. Rho-containing GABA-gated chloride channels are a subclass of GABA(A) receptors (GABAARs) entirely composed of rho subunits, where GABA molecules bind at the rho intersubunit interfaces. When activated by GABA, rho-GABAARs selectively allow the flow of chloride anions across the cell membrane down their electrochemical gradient. Rho-1 subunits are primarily expressed in retina where rho-1-containing GABAARs may play a role in retinal neurotransmission. Rho-1 GABAARs are also involved in neuronal tonic (extrasynaptic) and phasic (synaptic) transmission in the Purkinje neurons of the cerebellum. Rho-1 GABAARs may also contribute to the regulation of glial development in the cerebellum by controlling extrasynaptic transmission. This is Gamma-aminobutyric acid receptor subunit rho-1 from Rattus norvegicus (Rat).